Reading from the N-terminus, the 66-residue chain is Large ribosomal subunit protein bL35 (66 aa).

Belongs to the bacterial ribosomal protein bL35 family.

The chain is Large ribosomal subunit protein bL35 from Lysinibacillus sphaericus (strain C3-41).